The sequence spans 137 residues: Large ribosomal subunit protein uL16 (137 aa).

This sequence belongs to the universal ribosomal protein uL16 family. As to quaternary structure, part of the 50S ribosomal subunit.

Functionally, binds 23S rRNA and is also seen to make contacts with the A and possibly P site tRNAs. This is Large ribosomal subunit protein uL16 from Cereibacter sphaeroides (strain ATCC 17029 / ATH 2.4.9) (Rhodobacter sphaeroides).